We begin with the raw amino-acid sequence, 273 residues long: 4-hydroxy-tetrahydrodipicolinate reductase (273 aa).

NAD(+) is bound by residues Gly12–Met17 and Glu38. Arg39 lines the NADP(+) pocket. Residues Gly102–Thr104 and Ala126–Phe129 contribute to the NAD(+) site. The active-site Proton donor/acceptor is His159. His160 is a (S)-2,3,4,5-tetrahydrodipicolinate binding site. Lys163 (proton donor) is an active-site residue. Residue Gly169–Thr170 coordinates (S)-2,3,4,5-tetrahydrodipicolinate.

It belongs to the DapB family. As to quaternary structure, homotetramer.

It localises to the cytoplasm. The catalysed reaction is (S)-2,3,4,5-tetrahydrodipicolinate + NAD(+) + H2O = (2S,4S)-4-hydroxy-2,3,4,5-tetrahydrodipicolinate + NADH + H(+). It catalyses the reaction (S)-2,3,4,5-tetrahydrodipicolinate + NADP(+) + H2O = (2S,4S)-4-hydroxy-2,3,4,5-tetrahydrodipicolinate + NADPH + H(+). Its pathway is amino-acid biosynthesis; L-lysine biosynthesis via DAP pathway; (S)-tetrahydrodipicolinate from L-aspartate: step 4/4. Its function is as follows. Catalyzes the conversion of 4-hydroxy-tetrahydrodipicolinate (HTPA) to tetrahydrodipicolinate. The chain is 4-hydroxy-tetrahydrodipicolinate reductase from Salmonella typhimurium (strain LT2 / SGSC1412 / ATCC 700720).